We begin with the raw amino-acid sequence, 444 residues long: 3-isopropylmalate dehydratase large subunit (444 aa).

Residues X348, C408, and X411 each contribute to the [4Fe-4S] cluster site. Residues 423 to 444 (ERXXSHSNRNFEGRQGRGGRTH) form a disordered region.

This sequence belongs to the aconitase/IPM isomerase family. LeuC type 1 subfamily. In terms of assembly, heterodimer of LeuC and LeuD. The cofactor is [4Fe-4S] cluster.

It carries out the reaction (2R,3S)-3-isopropylmalate = (2S)-2-isopropylmalate. Its pathway is amino-acid biosynthesis; L-leucine biosynthesis; L-leucine from 3-methyl-2-oxobutanoate: step 2/4. Its function is as follows. Catalyzes the isomerization between 2-isopropylmalate and 3-isopropylmalate, via the formation of 2-isopropylmaleate. This chain is 3-isopropylmalate dehydratase large subunit, found in Buchnera aphidicola subsp. Uroleucon rudbeckiae.